The chain runs to 203 residues: uncharacterized protein (203 aa).

Belongs to the DadA oxidoreductase family.

In terms of biological role, either a functional dehydrogenase or a non-functional fragment. This is an uncharacterized protein from Sinorhizobium fredii (strain NBRC 101917 / NGR234).